Here is a 359-residue protein sequence, read N- to C-terminus: Tyrosine-protein phosphatase non-receptor type 7 (359 aa).

The disordered stretch occupies residues methionine 1 to lysine 33. Residues leucine 38–aspartate 51 form an interaction with MAP kinases region. Serine 44 carries the phosphoserine modification. Threonine 66 is subject to Phosphothreonine. Phosphoserine is present on residues serine 93 and serine 143. One can recognise a Tyrosine-protein phosphatase domain in the interval leucine 97–tyrosine 349. Residues aspartate 257, cysteine 290–arginine 296, and glutamine 334 contribute to the substrate site. Residue cysteine 290 is the Phosphocysteine intermediate of the active site. At cysteine 290 the chain carries Cysteine sulfenic acid (-SOH).

It belongs to the protein-tyrosine phosphatase family. Non-receptor class subfamily. Oxidized at active site cysteine. Treatment with pervanadate (vanadate and H(2)O(2)) or with antigen enhanced oxidation of active site cysteine. In terms of tissue distribution, expressed in bone marrow-derived mast cells.

It is found in the cytoplasm. The protein resides in the cytoskeleton. It carries out the reaction O-phospho-L-tyrosyl-[protein] + H2O = L-tyrosyl-[protein] + phosphate. Inhibited upon FCER1A triggering. Functionally, may play a role in the regulation of T and B-lymphocyte development and signal transduction. The polypeptide is Tyrosine-protein phosphatase non-receptor type 7 (Ptpn7) (Mus musculus (Mouse)).